The following is a 424-amino-acid chain: UDP-N-acetylglucosamine 1-carboxyvinyltransferase (424 aa).

22–23 (KN) serves as a coordination point for phosphoenolpyruvate. R93 lines the UDP-N-acetyl-alpha-D-glucosamine pocket. Residue C117 is the Proton donor of the active site. A 2-(S-cysteinyl)pyruvic acid O-phosphothioketal modification is found at C117. Residues 162 to 165 (KVSV), D307, and I329 each bind UDP-N-acetyl-alpha-D-glucosamine.

It belongs to the EPSP synthase family. MurA subfamily.

The protein localises to the cytoplasm. The catalysed reaction is phosphoenolpyruvate + UDP-N-acetyl-alpha-D-glucosamine = UDP-N-acetyl-3-O-(1-carboxyvinyl)-alpha-D-glucosamine + phosphate. It participates in cell wall biogenesis; peptidoglycan biosynthesis. Its function is as follows. Cell wall formation. Adds enolpyruvyl to UDP-N-acetylglucosamine. This is UDP-N-acetylglucosamine 1-carboxyvinyltransferase from Actinobacillus pleuropneumoniae serotype 5b (strain L20).